The following is a 356-amino-acid chain: Chorismate synthase (356 aa).

Arg46 contributes to the NADP(+) binding site. FMN-binding positions include 122–124 (RSS), 234–235 (NG), Gly274, 289–293 (KPTPS), and Arg315.

This sequence belongs to the chorismate synthase family. Homotetramer. FMNH2 serves as cofactor.

It carries out the reaction 5-O-(1-carboxyvinyl)-3-phosphoshikimate = chorismate + phosphate. The protein operates within metabolic intermediate biosynthesis; chorismate biosynthesis; chorismate from D-erythrose 4-phosphate and phosphoenolpyruvate: step 7/7. In terms of biological role, catalyzes the anti-1,4-elimination of the C-3 phosphate and the C-6 proR hydrogen from 5-enolpyruvylshikimate-3-phosphate (EPSP) to yield chorismate, which is the branch point compound that serves as the starting substrate for the three terminal pathways of aromatic amino acid biosynthesis. This reaction introduces a second double bond into the aromatic ring system. This Campylobacter fetus subsp. fetus (strain 82-40) protein is Chorismate synthase.